The chain runs to 367 residues: Cis-3-hydroxy-L-proline dehydratase (367 aa).

The Proton donor/acceptor role is filled by Lys-165. The Mg(2+) site is built by Asp-193, Glu-218, and Asp-241. The Proton donor/acceptor role is filled by Lys-265.

It belongs to the mandelate racemase/muconate lactonizing enzyme family. It depends on Mg(2+) as a cofactor.

The enzyme catalyses cis-3-hydroxy-L-proline = 1-pyrroline-2-carboxylate + H2O. Catalyzes the dehydration of cis-3-hydroxy-L-proline (c3LHyp) to Delta(1)-pyrroline-2-carboxylate (Pyr2C). Is likely involved in a degradation pathway that converts c3LHyp to L-proline, which allows L.aggregata to grow on c3LHyp as a sole carbon source. Also catalyzes the epimerization of c3LHyp to trans-3-hydroxy-D-proline (t3DHyp), a competing reaction occurring from the same enolate anion intermediate. L-proline, t3LHyp, t4LHyp, c4DHyp and their methylated derivatives are not substrates. The polypeptide is Cis-3-hydroxy-L-proline dehydratase (Roseibium aggregatum (strain ATCC 25650 / DSM 13394 / JCM 20685 / NBRC 16684 / NCIMB 2208 / IAM 12614 / B1) (Stappia aggregata)).